We begin with the raw amino-acid sequence, 273 residues long: Ribosomal RNA small subunit methyltransferase A (273 aa).

S-adenosyl-L-methionine is bound by residues N18, L20, G45, E66, D91, and N113.

The protein belongs to the class I-like SAM-binding methyltransferase superfamily. rRNA adenine N(6)-methyltransferase family. RsmA subfamily.

The protein localises to the cytoplasm. It carries out the reaction adenosine(1518)/adenosine(1519) in 16S rRNA + 4 S-adenosyl-L-methionine = N(6)-dimethyladenosine(1518)/N(6)-dimethyladenosine(1519) in 16S rRNA + 4 S-adenosyl-L-homocysteine + 4 H(+). In terms of biological role, specifically dimethylates two adjacent adenosines (A1518 and A1519) in the loop of a conserved hairpin near the 3'-end of 16S rRNA in the 30S particle. May play a critical role in biogenesis of 30S subunits. The chain is Ribosomal RNA small subunit methyltransferase A from Escherichia fergusonii (strain ATCC 35469 / DSM 13698 / CCUG 18766 / IAM 14443 / JCM 21226 / LMG 7866 / NBRC 102419 / NCTC 12128 / CDC 0568-73).